A 307-amino-acid chain; its full sequence is Membrane protein insertase YidC 1 (307 aa).

The signal sequence occupies residues methionine 1–glycine 22. Cysteine 23 carries N-palmitoyl cysteine lipidation. Cysteine 23 is lipidated: S-diacylglycerol cysteine. 5 helical membrane-spanning segments follow: residues tyrosine 59–isoleucine 79, glycine 136–isoleucine 156, leucine 177–glycine 197, threonine 205–proline 225, and alanine 226–isoleucine 246. The disordered stretch occupies residues glutamate 260–lysine 307.

Belongs to the OXA1/ALB3/YidC family. Type 2 subfamily.

It is found in the cell membrane. Functionally, required for the insertion and/or proper folding and/or complex formation of integral membrane proteins into the membrane. Involved in integration of membrane proteins that insert both dependently and independently of the Sec translocase complex, as well as at least some lipoproteins. This Lactiplantibacillus plantarum (strain ATCC BAA-793 / NCIMB 8826 / WCFS1) (Lactobacillus plantarum) protein is Membrane protein insertase YidC 1.